We begin with the raw amino-acid sequence, 141 residues long: D-aminoacyl-tRNA deacylase (141 aa).

The Gly-cisPro motif, important for rejection of L-amino acids motif lies at 133-134; that stretch reads GP.

Belongs to the DTD family. In terms of assembly, homodimer.

It is found in the cytoplasm. It carries out the reaction glycyl-tRNA(Ala) + H2O = tRNA(Ala) + glycine + H(+). The catalysed reaction is a D-aminoacyl-tRNA + H2O = a tRNA + a D-alpha-amino acid + H(+). An aminoacyl-tRNA editing enzyme that deacylates mischarged D-aminoacyl-tRNAs. Also deacylates mischarged glycyl-tRNA(Ala), protecting cells against glycine mischarging by AlaRS. Acts via tRNA-based rather than protein-based catalysis; rejects L-amino acids rather than detecting D-amino acids in the active site. By recycling D-aminoacyl-tRNA to D-amino acids and free tRNA molecules, this enzyme counteracts the toxicity associated with the formation of D-aminoacyl-tRNA entities in vivo and helps enforce protein L-homochirality. The sequence is that of D-aminoacyl-tRNA deacylase from Beutenbergia cavernae (strain ATCC BAA-8 / DSM 12333 / CCUG 43141 / JCM 11478 / NBRC 16432 / NCIMB 13614 / HKI 0122).